Consider the following 130-residue polypeptide: MNFVFLWAALGGAIGSSLRYFVGKMMPSKFLMFESFPLGTFSVNIIGCFVIGFMGHLAVKKVFGDDFGIFFVTGVLGGFTTFSSYGLDTLKLLQKSQYIEAVSYALGTNILGLTGVAIGWFLAKNFVGIH.

A run of 4 helical transmembrane segments spans residues Phe3 to Gly23, Gly39 to Val59, Phe67 to Leu87, and Val102 to Leu122. Residues Gly77 and Thr80 each coordinate Na(+).

Belongs to the fluoride channel Fluc/FEX (TC 1.A.43) family.

The protein resides in the cell inner membrane. It catalyses the reaction fluoride(in) = fluoride(out). Na(+) is not transported, but it plays an essential structural role and its presence is essential for fluoride channel function. Fluoride-specific ion channel. Important for reducing fluoride concentration in the cell, thus reducing its toxicity. The protein is Fluoride-specific ion channel FluC of Helicobacter pylori (strain ATCC 700392 / 26695) (Campylobacter pylori).